The primary structure comprises 463 residues: L-seryl-tRNA(Sec) selenium transferase (463 aa).

An N6-(pyridoxal phosphate)lysine modification is found at K295.

Belongs to the SelA family. Homodecamer; pentamer of dimers. Binds only one seryl-tRNA(Sec) per dimer. Pyridoxal 5'-phosphate serves as cofactor.

The protein resides in the cytoplasm. It carries out the reaction L-seryl-tRNA(Sec) + selenophosphate + H(+) = L-selenocysteinyl-tRNA(Sec) + phosphate. It functions in the pathway aminoacyl-tRNA biosynthesis; selenocysteinyl-tRNA(Sec) biosynthesis; selenocysteinyl-tRNA(Sec) from L-seryl-tRNA(Sec) (bacterial route): step 1/1. Functionally, converts seryl-tRNA(Sec) to selenocysteinyl-tRNA(Sec) required for selenoprotein biosynthesis. The chain is L-seryl-tRNA(Sec) selenium transferase from Escherichia coli O6:H1 (strain CFT073 / ATCC 700928 / UPEC).